Here is an 895-residue protein sequence, read N- to C-terminus: Putative endoplasmic reticulum metallopeptidase 1-A (895 aa).

The tract at residues 1–30 (MLRRRGGPNELRDELNNSKNQPEDDQRTKR) is disordered. Residues 1 to 34 (MLRRRGGPNELRDELNNSKNQPEDDQRTKRGRES) are Cytoplasmic-facing. Residues 10 to 30 (ELRDELNNSKNQPEDDQRTKR) show a composition bias toward basic and acidic residues. A helical transmembrane segment spans residues 35–55 (IGFRHWIYFVLTVAIVYAGVV). The Lumenal portion of the chain corresponds to 56–383 (ALHRKMPAVR…VVGLFTVYYS (328 aa)). His-174 and Asp-186 together coordinate Zn(2+). Catalysis depends on Glu-220, which acts as the Proton acceptor. Zn(2+)-binding residues include Glu-221, Glu-247, and His-323. The helical transmembrane segment at 384–404 (VNVGKLLNYIACFATYFLVVL) threads the bilayer. Residues 405 to 423 (RIRNRLYSVGDLAIAFKHH) are Cytoplasmic-facing. Residues 424–444 (VVAFLAMVITMLLIIAFVVQM) traverse the membrane as a helical segment. At 445 to 452 (DLVMCWYK) the chain is on the lumenal side. A helical membrane pass occupies residues 453 to 473 (MPEIVGALYVLPMLIAGAIVH). Over 474–492 (SHYADNNRIRNVEMVQYDT) the chain is Cytoplasmic. A helical transmembrane segment spans residues 493–513 (ILLSFASILFLMTFYNLSSAF). Residues 514 to 517 (YVLN) are Lumenal-facing. The chain crosses the membrane as a helical span at residues 518–538 (NLILPVFKDIIIWALGLFGVI). Topologically, residues 539–544 (RRVTPR) are cytoplasmic. The helical transmembrane segment at 545 to 565 (VLFFTQLFCFLPTFVFAAYAI) threads the bilayer. Residues 566–586 (SQCVDFFVPVMGRLGNAINPE) are Lumenal-facing. A helical transmembrane segment spans residues 587 to 607 (FIMGPLGLVIASGFILFVNNL). Residues 608–613 (FYISRR) are Cytoplasmic-facing. The helical transmembrane segment at 614–634 (MNYIIRLLFAIFALFILVLIT) threads the bilayer. At 635–895 (TKVGNPYEYS…GRSEIVVKIF (261 aa)) the chain is on the lumenal side. N-linked (GlcNAc...) asparagine glycosylation is found at Asn-659, Asn-702, and Asn-758.

Belongs to the peptidase M28 family. Requires Zn(2+) as cofactor.

The protein resides in the endoplasmic reticulum membrane. In Caenorhabditis elegans, this protein is Putative endoplasmic reticulum metallopeptidase 1-A.